A 379-amino-acid polypeptide reads, in one-letter code: tRNA-specific 2-thiouridylase MnmA (379 aa).

ATP-binding positions include 23 to 30 and leucine 49; that span reads AMSGGVDS. The active-site Nucleophile is the cysteine 117. The cysteines at positions 117 and 214 are disulfide-linked. Residue glycine 141 participates in ATP binding. Residues 163 to 165 form an interaction with tRNA region; sequence RDQ. Cysteine 214 acts as the Cysteine persulfide intermediate in catalysis.

Belongs to the MnmA/TRMU family.

It is found in the cytoplasm. The catalysed reaction is S-sulfanyl-L-cysteinyl-[protein] + uridine(34) in tRNA + AH2 + ATP = 2-thiouridine(34) in tRNA + L-cysteinyl-[protein] + A + AMP + diphosphate + H(+). Functionally, catalyzes the 2-thiolation of uridine at the wobble position (U34) of tRNA, leading to the formation of s(2)U34. The protein is tRNA-specific 2-thiouridylase MnmA of Cereibacter sphaeroides (strain KD131 / KCTC 12085) (Rhodobacter sphaeroides).